Reading from the N-terminus, the 343-residue chain is SUMO-activating enzyme subunit aos-1 (343 aa).

Belongs to the ubiquitin-activating E1 family. In terms of assembly, heterodimer of aos-1 and uba-2.

The protein operates within protein modification; protein sumoylation. The dimeric enzyme acts as an E1 ligase for smo-1. It mediates ATP-dependent activation of smo-1 and formation of a thioester with a conserved cysteine residue on uba-2. In Caenorhabditis elegans, this protein is SUMO-activating enzyme subunit aos-1 (aos-1).